The following is a 156-amino-acid chain: SsrA-binding protein (156 aa).

This sequence belongs to the SmpB family.

Its subcellular location is the cytoplasm. Functionally, required for rescue of stalled ribosomes mediated by trans-translation. Binds to transfer-messenger RNA (tmRNA), required for stable association of tmRNA with ribosomes. tmRNA and SmpB together mimic tRNA shape, replacing the anticodon stem-loop with SmpB. tmRNA is encoded by the ssrA gene; the 2 termini fold to resemble tRNA(Ala) and it encodes a 'tag peptide', a short internal open reading frame. During trans-translation Ala-aminoacylated tmRNA acts like a tRNA, entering the A-site of stalled ribosomes, displacing the stalled mRNA. The ribosome then switches to translate the ORF on the tmRNA; the nascent peptide is terminated with the 'tag peptide' encoded by the tmRNA and targeted for degradation. The ribosome is freed to recommence translation, which seems to be the essential function of trans-translation. This chain is SsrA-binding protein, found in Lactiplantibacillus plantarum (strain ATCC BAA-793 / NCIMB 8826 / WCFS1) (Lactobacillus plantarum).